A 57-amino-acid polypeptide reads, in one-letter code: MEWKLLLIVLPWLLVCKIFYKVEDFTEPDVAYQSIDYHPEDYIDSFTDFQKHDYFQY.

An N-terminal signal peptide occupies residues 1-16 (MEWKLLLIVLPWLLVC).

It is found in the secreted. This chain is Protein new-glue 4 (ng4), found in Drosophila melanogaster (Fruit fly).